A 55-amino-acid polypeptide reads, in one-letter code: Large ribosomal subunit protein bL33 (55 aa).

The protein belongs to the bacterial ribosomal protein bL33 family.

This is Large ribosomal subunit protein bL33 from Bradyrhizobium sp. (strain BTAi1 / ATCC BAA-1182).